Consider the following 378-residue polypeptide: C-type lectin domain family 17, member A (378 aa).

Positions Met-1–Met-119 are disordered. The Cytoplasmic portion of the chain corresponds to Met-1–Tyr-172. Acidic residues-rich tracts occupy residues Met-17–Glu-27, Met-43–Glu-53, and Met-69–Glu-79. A compositionally biased stretch (pro residues) spans Lys-86–Pro-101. Residues Leu-173–Ile-193 form a helical; Signal-anchor for type II membrane protein membrane-spanning segment. The Extracellular portion of the chain corresponds to Lys-194–Cys-378. N-linked (GlcNAc...) asparagine glycans are attached at residues Asn-215 and Asn-237. 3 disulfides stabilise this stretch: Cys-254–Cys-265, Cys-282–Cys-372, and Cys-350–Cys-364. Residues Phe-261–Glu-373 enclose the C-type lectin domain. An N-linked (GlcNAc...) asparagine glycan is attached at Asn-285. Ca(2+)-binding residues include Glu-341, Asn-343, Glu-348, Asn-360, and Asp-361.

As to quaternary structure, oligomer; disulfide-linked. In terms of processing, phosphorylated on tyrosine residues. As to expression, expressed on dividing B-cells of germinal centers in various tissues, including lymph nodes, tonsils, stomach, intestine, appendix and spleen.

The protein resides in the membrane. Its function is as follows. Cell surface receptor which may be involved in carbohydrate-mediated communication between cells in the germinal center. Binds glycans with terminal alpha-linked mannose or fucose residues. The protein is C-type lectin domain family 17, member A (CLEC17A) of Homo sapiens (Human).